Reading from the N-terminus, the 417-residue chain is 4-hydroxy-3-methylbut-2-en-1-yl diphosphate synthase (flavodoxin) (417 aa).

Cys303, Cys306, Cys349, and Glu356 together coordinate [4Fe-4S] cluster.

This sequence belongs to the IspG family. Requires [4Fe-4S] cluster as cofactor.

The enzyme catalyses (2E)-4-hydroxy-3-methylbut-2-enyl diphosphate + oxidized [flavodoxin] + H2O + 2 H(+) = 2-C-methyl-D-erythritol 2,4-cyclic diphosphate + reduced [flavodoxin]. The protein operates within isoprenoid biosynthesis; isopentenyl diphosphate biosynthesis via DXP pathway; isopentenyl diphosphate from 1-deoxy-D-xylulose 5-phosphate: step 5/6. Converts 2C-methyl-D-erythritol 2,4-cyclodiphosphate (ME-2,4cPP) into 1-hydroxy-2-methyl-2-(E)-butenyl 4-diphosphate. The chain is 4-hydroxy-3-methylbut-2-en-1-yl diphosphate synthase (flavodoxin) from Mesorhizobium japonicum (strain LMG 29417 / CECT 9101 / MAFF 303099) (Mesorhizobium loti (strain MAFF 303099)).